A 387-amino-acid polypeptide reads, in one-letter code: 3-ketoacyl-CoA thiolase (387 aa).

Cysteine 91 (acyl-thioester intermediate) is an active-site residue. Catalysis depends on proton acceptor residues histidine 343 and cysteine 373.

Belongs to the thiolase-like superfamily. Thiolase family. In terms of assembly, heterotetramer of two alpha chains (FadB) and two beta chains (FadA).

The protein resides in the cytoplasm. The enzyme catalyses an acyl-CoA + acetyl-CoA = a 3-oxoacyl-CoA + CoA. Its pathway is lipid metabolism; fatty acid beta-oxidation. Functionally, catalyzes the final step of fatty acid oxidation in which acetyl-CoA is released and the CoA ester of a fatty acid two carbons shorter is formed. This Escherichia coli (strain UTI89 / UPEC) protein is 3-ketoacyl-CoA thiolase.